We begin with the raw amino-acid sequence, 1388 residues long: Kinesin-like protein KIF15 (1388 aa).

Positions 1–25 (MAPGCKTELRSVTNGQSNQPSNEGD) are disordered. The segment covering 10–22 (RSVTNGQSNQPSN) has biased composition (polar residues). One can recognise a Kinesin motor domain in the interval 26–363 (AIKVFVRIRP…LNFAQRAKLI (338 aa)). Residue 109–116 (GQTGSGKT) coordinates ATP. A coiled-coil region spans residues 368–1388 (VVNEDTQGNV…FLKEKKRSES (1021 aa)). A Phosphothreonine modification is found at threonine 399. Residue serine 568 is modified to Phosphoserine. Lysine 1009 carries the N6-acetyllysine modification. Phosphoserine is present on residues serine 1141 and serine 1169. Residues 1228-1250 (QKENSDQNHPDNQQLKNEQEESI) form a disordered region.

It belongs to the TRAFAC class myosin-kinesin ATPase superfamily. Kinesin family. KLP2 subfamily. In terms of assembly, interacts with MKI67 and TPX2. As to expression, expressed in testis, colon, thymus and in breast cancer.

It localises to the cytoplasm. The protein resides in the cytoskeleton. Its subcellular location is the spindle. Plus-end directed kinesin-like motor enzyme involved in mitotic spindle assembly. In Homo sapiens (Human), this protein is Kinesin-like protein KIF15 (KIF15).